Reading from the N-terminus, the 451-residue chain is Lysine histidine transporter-like 3 (451 aa).

Residues 1 to 40 (MKGIPSSSNQILNQDLVEDQSFELEDWLPITASRNANWYY) lie on the Cytoplasmic side of the membrane. The chain crosses the membrane as a helical span at residues 41-61 (SAFHNVTAIVGAGVLGLPYAM). Residues 62-63 (SE) lie on the Extracellular side of the membrane. Residues 64 to 84 (LGWGPGVVVLILSWVITLYTF) form a helical membrane-spanning segment. Topologically, residues 85–115 (WQMIEMHEMFEGKRFDRYHELGQAAFGKKLG) are cytoplasmic. Residues 116–136 (LYIVVPLQLLVETSACIVYMV) form a helical membrane-spanning segment. The Extracellular segment spans residues 137–159 (TGGESLKKIHQLSVGDYECRKLK). A helical transmembrane segment spans residues 160–177 (VRHFILIFASSQFVLSLL). Residues 178–182 (KNFNS) lie on the Cytoplasmic side of the membrane. The chain crosses the membrane as a helical span at residues 183–203 (ISGVSLVAAVMSMSYSTIAWV). Residues 204 to 227 (ASLTKGVANNVEYGYKRRNNTSVP) lie on the Extracellular side of the membrane. The chain crosses the membrane as a helical span at residues 228 to 248 (LAFLGALGEMAFAYAGHNVVL). At 249 to 269 (EIQATIPSTPENPSKRPMWKG) the chain is on the cytoplasmic side. The helical transmembrane segment at 270-290 (AIVAYIIVAFCYFPVALVGFW) threads the bilayer. Residues 291–309 (TFGNNVEENILKTLRGPKG) are Extracellular-facing. A helical transmembrane segment spans residues 310–330 (LIIVANIFVIIHLMGSYQVYA). The Cytoplasmic segment spans residues 331–358 (MPVFDMIESVMIKKWHFSPTRVLRFTIR). The chain crosses the membrane as a helical span at residues 359–379 (WTFVAATMGIAVALPHFSALL). Residue Ser380 is a topological domain, extracellular. The chain crosses the membrane as a helical span at residues 381-401 (FFGGFIFAPTTYFIPCIIWLI). The Cytoplasmic portion of the chain corresponds to 402 to 413 (LKKPKRFSLSWC). A helical membrane pass occupies residues 414–434 (INWICIILGVLVMIIAPIGGL). The Extracellular portion of the chain corresponds to 435–451 (AKLMNALKQPDSSCKST).

Belongs to the amino acid/polyamine transporter 2 family. Amino acid/auxin permease (AAAP) (TC 2.A.18.2) subfamily.

It is found in the cell membrane. Functionally, amino acid transporter. The chain is Lysine histidine transporter-like 3 from Arabidopsis thaliana (Mouse-ear cress).